The primary structure comprises 631 residues: Plastidic ATP/ADP-transporter (631 aa).

Helical transmembrane passes span 106 to 126 (IELV…CILF), 149 to 169 (IIPF…MLLY), 180 to 200 (ALFY…GFVL), 238 to 258 (LFYV…FWGF), 271 to 290 (FYPL…GRTV), 313 to 333 (GMMS…WWVN), 369 to 389 (LATL…TWKS), 407 to 427 (DFST…QWIF), 442 to 462 (VLLL…PLAP), 465 to 485 (AKFG…QNIF), and 543 to 563 (LASS…AWLG). The tract at residues 586 to 631 (ERASLKIPVVSQNENGNGPLSSESSLNPAGGDSTNASSEPSSPRSL) is disordered. Positions 595 to 631 (VSQNENGNGPLSSESSLNPAGGDSTNASSEPSSPRSL) are enriched in polar residues.

It belongs to the ADP/ATP translocase tlc (TC 2.A.12.2) family.

It localises to the plastid. The protein resides in the chloroplast membrane. The protein is Plastidic ATP/ADP-transporter of Solanum tuberosum (Potato).